The primary structure comprises 469 residues: Probable NADPH:adrenodoxin oxidoreductase, mitochondrial (469 aa).

The N-terminal 38 residues, 1-38 (MLSRFIKRTYSTQTSSPVVGIIGSGPAAFYTAHRLLRN), are a transit peptide targeting the mitochondrion. Positions 27, 48, 56, and 92 each coordinate FAD. NADP(+) is bound by residues 164 to 167 (HGNV), 208 to 209 (RR), and E220. Residues W375 and 382–384 (GVI) each bind FAD. NADP(+) is bound at residue G382.

This sequence belongs to the ferredoxin--NADP reductase type 1 family. Requires FAD as cofactor.

It localises to the mitochondrion inner membrane. The enzyme catalyses 2 reduced [adrenodoxin] + NADP(+) + H(+) = 2 oxidized [adrenodoxin] + NADPH. Adrenodoxin reductase transfers electrons from NADPH to adrenodoxin, which is involved in heme A biosynthesis and in iron-sulfur cluster assembly. Involved in the electron transfer to heme A synthase etp1(cd), a heme protein that catalyzes the conversion of heme O to heme A. Required for the de novo synthesis of Fe-S clusters on iron sulfur cluster assembly protein isu1. Involved in electron delivery for Fe-S cluster synthesis. Essential for coenzyme Q biosynthesis. May be involved in the electron transfer required for the hydroxylation reaction performed by coq6. May play a role in cellular and mitochondrial iron homeostasis. The chain is Probable NADPH:adrenodoxin oxidoreductase, mitochondrial (arh1) from Schizosaccharomyces pombe (strain 972 / ATCC 24843) (Fission yeast).